The sequence spans 280 residues: GTP-binding protein rhoC (280 aa).

The interval 13 to 59 (TSRRHSLVTPPPSVAPRQNRMRSQSVRVSNGTVSTDNSMSSGRVSEA) is disordered. Residues 33–59 (MRSQSVRVSNGTVSTDNSMSSGRVSEA) show a composition bias toward polar residues. Residue 76–83 (GDGGCGKT) coordinates GTP. The Effector region signature appears at 98-106 (YVPTVFENY). Residues 125–129 (DTAGQ) and 183–186 (LKSD) each bind GTP. Residues 251–275 (WDTRLPSSSGKPGGKPIGGKKIKKR) are disordered. The residue at position 277 (cysteine 277) is a Cysteine methyl ester. Residue cysteine 277 is the site of S-geranylgeranyl cysteine attachment. Residues 278–280 (KIL) constitute a propeptide, removed in mature form.

It belongs to the small GTPase superfamily. Rho family.

The protein resides in the cell membrane. In Emericella nidulans (strain FGSC A4 / ATCC 38163 / CBS 112.46 / NRRL 194 / M139) (Aspergillus nidulans), this protein is GTP-binding protein rhoC (rhoC).